We begin with the raw amino-acid sequence, 328 residues long: Nucleotide-binding protein BLD_0430 (328 aa).

Residues 1 to 35 (MNQQTTNRDTGEAAATNAPANSATSTSTPDNQPTP) are disordered. Residues 13-29 (AAATNAPANSATSTSTP) show a composition bias toward low complexity. Position 46–53 (46–53 (GMSGAGRS)) interacts with ATP. GTP is bound at residue 101 to 104 (DVRS).

It belongs to the RapZ-like family.

Its function is as follows. Displays ATPase and GTPase activities. This chain is Nucleotide-binding protein BLD_0430, found in Bifidobacterium longum (strain DJO10A).